A 436-amino-acid chain; its full sequence is GTPase Der (436 aa).

EngA-type G domains are found at residues 4–167 (PIVA…KEEE) and 176–351 (IRLS…ENHK). Residues 10–17 (GRPNVGKS), 57–61 (DTGGI), 119–122 (NKVD), 182–189 (GRPNVGKS), 229–233 (DTAGM), and 294–297 (NKWD) each bind GTP. The KH-like domain occupies 352–436 (KRVQSSTLNE…PVHIIARKRN (85 aa)).

The protein belongs to the TRAFAC class TrmE-Era-EngA-EngB-Septin-like GTPase superfamily. EngA (Der) GTPase family. Associates with the 50S ribosomal subunit.

GTPase that plays an essential role in the late steps of ribosome biogenesis. The polypeptide is GTPase Der (Staphylococcus saprophyticus subsp. saprophyticus (strain ATCC 15305 / DSM 20229 / NCIMB 8711 / NCTC 7292 / S-41)).